A 237-amino-acid polypeptide reads, in one-letter code: Ribonuclease 3 (237 aa).

The 129-residue stretch at 7–135 (IKEVEAKLKF…ILGAVYLDGG (129 aa)) folds into the RNase III domain. Glu-48 lines the Mg(2+) pocket. The active site involves Asp-52. Mg(2+) contacts are provided by Asn-121 and Glu-124. The active site involves Glu-124. The region spanning 160-229 (NPKNRLQQLT…AQEALDANDY (70 aa)) is the DRBM domain.

It belongs to the ribonuclease III family. Homodimer. Mg(2+) is required as a cofactor.

It is found in the cytoplasm. The enzyme catalyses Endonucleolytic cleavage to 5'-phosphomonoester.. Its function is as follows. Digests double-stranded RNA. Involved in the processing of primary rRNA transcript to yield the immediate precursors to the large and small rRNAs (23S and 16S). Processes some mRNAs, and tRNAs when they are encoded in the rRNA operon. Processes pre-crRNA and tracrRNA of type II CRISPR loci if present in the organism. This Chlamydia felis (strain Fe/C-56) (Chlamydophila felis) protein is Ribonuclease 3.